The sequence spans 54 residues: Large ribosomal subunit protein bL33 (54 aa).

It belongs to the bacterial ribosomal protein bL33 family.

The chain is Large ribosomal subunit protein bL33 from Caldicellulosiruptor saccharolyticus (strain ATCC 43494 / DSM 8903 / Tp8T 6331).